The primary structure comprises 823 residues: DNA ligase (823 aa).

NAD(+) contacts are provided by residues aspartate 32 to aspartate 36, serine 81 to leucine 82, and glutamate 121. The active-site N6-AMP-lysine intermediate is the lysine 123. NAD(+) is bound by residues arginine 144, glutamate 181, lysine 299, and lysine 323. Residues cysteine 449, cysteine 452, cysteine 467, and cysteine 473 each coordinate Zn(2+). Positions glutamate 528–lysine 558 are disordered. The 78-residue stretch at glycine 746–cysteine 823 folds into the BRCT domain.

It belongs to the NAD-dependent DNA ligase family. LigA subfamily. The cofactor is Mg(2+). Requires Mn(2+) as cofactor.

It catalyses the reaction NAD(+) + (deoxyribonucleotide)n-3'-hydroxyl + 5'-phospho-(deoxyribonucleotide)m = (deoxyribonucleotide)n+m + AMP + beta-nicotinamide D-nucleotide.. In terms of biological role, DNA ligase that catalyzes the formation of phosphodiester linkages between 5'-phosphoryl and 3'-hydroxyl groups in double-stranded DNA using NAD as a coenzyme and as the energy source for the reaction. It is essential for DNA replication and repair of damaged DNA. The sequence is that of DNA ligase from Neisseria gonorrhoeae (strain NCCP11945).